A 219-amino-acid chain; its full sequence is Intraflagellar transport protein 22 (219 aa).

GTP contacts are provided by residues 12–19 (GPSKSGKS) and 72–79 (WDVGGSSK).

It belongs to the small GTPase superfamily. Rab family.

The protein resides in the cytoplasm. The protein localises to the cytoskeleton. It localises to the flagellum basal body. Its subcellular location is the cell projection. It is found in the cilium. The protein resides in the flagellum. In terms of biological role, required for flagellum formation. The chain is Intraflagellar transport protein 22 (IFT22) from Trypanosoma brucei brucei (strain 927/4 GUTat10.1).